The chain runs to 120 residues: Ribosome-binding factor A (120 aa).

The protein belongs to the RbfA family. As to quaternary structure, monomer. Binds 30S ribosomal subunits, but not 50S ribosomal subunits or 70S ribosomes.

It is found in the cytoplasm. Its function is as follows. One of several proteins that assist in the late maturation steps of the functional core of the 30S ribosomal subunit. Associates with free 30S ribosomal subunits (but not with 30S subunits that are part of 70S ribosomes or polysomes). Required for efficient processing of 16S rRNA. May interact with the 5'-terminal helix region of 16S rRNA. In Chlamydia pneumoniae (Chlamydophila pneumoniae), this protein is Ribosome-binding factor A.